A 504-amino-acid chain; its full sequence is Probable periplasmic serine endoprotease DegP-like (504 aa).

A signal peptide spans 1-26 (MLKTTTVAGLAAVLLTTGLPAEVAQS). Basic and acidic residues predominate over residues 102–118 (RADRWRDRRGPRGEGRL). Positions 102–122 (RADRWRDRRGPRGEGRLRPRA) are disordered. Residues 113–286 (RGEGRLRPRA…PASVAKDVVD (174 aa)) form a serine protease region. Active-site charge relay system residues include H140, D170, and S244. Substrate contacts are provided by residues 242-244 (GNS) and 299-303 (LGVQI). PDZ domains lie at 287 to 378 (SLIK…LWRS) and 401 to 491 (ATGE…IEAQ). Disordered stretches follow at residues 389-411 (GTLPSDAKEPAPATGEAQPDEGQ) and 428-447 (EDGKGVTIASVDPDSDAGDR).

The protein belongs to the peptidase S1C family.

It localises to the periplasm. The catalysed reaction is Acts on substrates that are at least partially unfolded. The cleavage site P1 residue is normally between a pair of hydrophobic residues, such as Val-|-Val.. In terms of biological role, might be efficient in the degradation of transiently denatured and unfolded proteins which accumulate in the periplasm following stress conditions. This chain is Probable periplasmic serine endoprotease DegP-like (degP1), found in Rhizobium meliloti (strain 1021) (Ensifer meliloti).